Here is a 159-residue protein sequence, read N- to C-terminus: Major latex protein 146 (159 aa).

It belongs to the MLP family. Laticifer.

The protein localises to the vacuole. It is found in the cytoplasmic vesicle. In terms of biological role, not known; MLPs constitute up to 50% of the soluble latex protein. The sequence is that of Major latex protein 146 (MLP146) from Papaver somniferum (Opium poppy).